A 318-amino-acid chain; its full sequence is Taste receptor type 2 member 60 (318 aa).

Topologically, residues 1-7 (MNGDHMV) are extracellular. Residues 8–28 (LGSSMTDEKAIILVIILLLLC) traverse the membrane as a helical segment. The Cytoplasmic segment spans residues 29–40 (LVAIAGNCFITA). The helical transmembrane segment at 41–61 (ALGMEWVLQRMLLPCDKLLVS) threads the bilayer. Over 62–88 (LGASRFCPQWVVMGKTTYVFLYPTAFP) the chain is Extracellular. A helical membrane pass occupies residues 89 to 109 (YNPVLRFLAFQWDLLNAATLW). At 110-128 (FSTWLSVFYCVKIATFTHP) the chain is on the cytoplasmic side. Residues 129–149 (VFLWLKHKLSEWVPWMLFSSV) traverse the membrane as a helical segment. Residues 150-183 (GLSSFTTILFFIGNHRVYQSYLRNHLQPWNVTGN) are Extracellular-facing. Residue asparagine 179 is glycosylated (N-linked (GlcNAc...) asparagine). Residues 184-204 (SIWSYCEKFYLFPLKMITWTM) form a helical membrane-spanning segment. Residues 205-234 (PTAVFFICMILLITSLGRHMKKALLTNSGF) are Cytoplasmic-facing. The chain crosses the membrane as a helical span at residues 235–255 (RDPSVQAHIKAMLALLSFAML). Over 256–264 (FISYFLSLV) the chain is Extracellular. A helical transmembrane segment spans residues 265–285 (FSAAGIFPPLDFKFWVWESVI). The Cytoplasmic portion of the chain corresponds to 286–318 (YLCAAVHPIILLFSNRRLRAVLKRCRSSRCGTP).

The protein belongs to the G-protein coupled receptor T2R family.

The protein resides in the membrane. In terms of biological role, receptor that may play a role in the perception of bitterness and is gustducin-linked. May play a role in sensing the chemical composition of the gastrointestinal content. The activity of this receptor may stimulate alpha gustducin, mediate PLC-beta-2 activation and lead to the gating of TRPM5. This is Taste receptor type 2 member 60 (TAS2R60) from Pongo pygmaeus (Bornean orangutan).